The following is a 211-amino-acid chain: Germin-like protein subfamily 3 member 3 (211 aa).

The first 20 residues, 1-20, serve as a signal peptide directing secretion; it reads MKMIIQIFFIISLISTISFA. C26 and C41 are disulfide-bonded. In terms of domain architecture, Cupin type-1 spans 55-201; the sequence is TGLGTAGNTS…TTFLSDAEVK (147 aa). Residue N62 is glycosylated (N-linked (GlcNAc...) asparagine). Residues H103, H105, and E110 each contribute to the Mn(2+) site. S140 carries the post-translational modification Phosphoserine. H149 provides a ligand contact to Mn(2+).

It belongs to the germin family. Oligomer (believed to be a pentamer but probably hexamer). Expressed in leaves and flowers.

It localises to the secreted. It is found in the extracellular space. The protein resides in the apoplast. Functionally, may play a role in plant defense. Probably has no oxalate oxidase activity even if the active site is conserved. The protein is Germin-like protein subfamily 3 member 3 (GER3) of Arabidopsis thaliana (Mouse-ear cress).